The sequence spans 129 residues: Small ribosomal subunit protein uS11 (129 aa).

This sequence belongs to the universal ribosomal protein uS11 family. As to quaternary structure, part of the 30S ribosomal subunit. Interacts with proteins S7 and S18. Binds to IF-3.

In terms of biological role, located on the platform of the 30S subunit, it bridges several disparate RNA helices of the 16S rRNA. Forms part of the Shine-Dalgarno cleft in the 70S ribosome. This is Small ribosomal subunit protein uS11 from Bacillus cereus (strain ATCC 14579 / DSM 31 / CCUG 7414 / JCM 2152 / NBRC 15305 / NCIMB 9373 / NCTC 2599 / NRRL B-3711).